A 490-amino-acid chain; its full sequence is Adenylosuccinate synthetase, chloroplastic (490 aa).

Residues 1–45 constitute a chloroplast transit peptide; it reads MSLSSLTLDSNPRFAVGGPYHRRYPPLHHPRSFVSCSAKRPAVSA. S46 is subject to N-acetylserine. Residues 77–83 and 105–107 each bind GTP; these read GDEGKGK and GHT. D78 serves as the catalytic Proton acceptor. 2 residues coordinate Mg(2+): D78 and G105. Residues 78–81, 103–106, T195, R209, Q289, T304, and R368 each bind IMP; these read DEGK and NAGH. Residue H106 is the Proton donor of the active site. 364–370 contacts substrate; the sequence is TTTGRPR. GTP-binding positions include R370, 396-398, and 479-481; these read KLD and GIG.

This sequence belongs to the adenylosuccinate synthetase family. Homodimer. Mg(2+) serves as cofactor.

The protein resides in the plastid. The protein localises to the chloroplast. The catalysed reaction is IMP + L-aspartate + GTP = N(6)-(1,2-dicarboxyethyl)-AMP + GDP + phosphate + 2 H(+). It functions in the pathway purine metabolism; AMP biosynthesis via de novo pathway; AMP from IMP: step 1/2. In terms of biological role, plays an important role in the de novo pathway and in the salvage pathway of purine nucleotide biosynthesis. Catalyzes the first committed step in the biosynthesis of AMP from IMP. In Arabidopsis thaliana (Mouse-ear cress), this protein is Adenylosuccinate synthetase, chloroplastic.